The chain runs to 122 residues: Large ribosomal subunit protein bL12 (122 aa).

Belongs to the bacterial ribosomal protein bL12 family. Homodimer. Part of the ribosomal stalk of the 50S ribosomal subunit. Forms a multimeric L10(L12)X complex, where L10 forms an elongated spine to which 2 to 4 L12 dimers bind in a sequential fashion. Binds GTP-bound translation factors.

Its function is as follows. Forms part of the ribosomal stalk which helps the ribosome interact with GTP-bound translation factors. Is thus essential for accurate translation. The chain is Large ribosomal subunit protein bL12 from Actinobacillus succinogenes (strain ATCC 55618 / DSM 22257 / CCUG 43843 / 130Z).